A 266-amino-acid chain; its full sequence is uncharacterized protein (266 aa).

This is an uncharacterized protein from Ostreid herpesvirus 1 (isolate France) (OsHV-1).